The primary structure comprises 54 residues: MAKIRPPKPKRMGRGAQRCQRCGTRDAVIQKYGLYLCRQCFREIAPTLGFRKNR.

Zn(2+)-binding residues include cysteine 19, cysteine 22, cysteine 37, and cysteine 40.

It belongs to the universal ribosomal protein uS14 family. Zinc-binding uS14 subfamily. In terms of assembly, part of the 30S ribosomal subunit. It depends on Zn(2+) as a cofactor.

Its function is as follows. Binds 16S rRNA, required for the assembly of 30S particles. This Aeropyrum pernix (strain ATCC 700893 / DSM 11879 / JCM 9820 / NBRC 100138 / K1) protein is Small ribosomal subunit protein uS14.